Consider the following 120-residue polypeptide: uncharacterized protein (120 aa).

The first 19 residues, 1 to 19 (MKKIVCAVVALLLTLPAWA), serve as a signal peptide directing secretion.

This is an uncharacterized protein from Salmonella typhimurium (strain LT2 / SGSC1412 / ATCC 700720).